The primary structure comprises 124 residues: Large ribosomal subunit protein bL12 (124 aa).

It belongs to the bacterial ribosomal protein bL12 family. As to quaternary structure, homodimer. Part of the ribosomal stalk of the 50S ribosomal subunit. Forms a multimeric L10(L12)X complex, where L10 forms an elongated spine to which 2 to 4 L12 dimers bind in a sequential fashion. Binds GTP-bound translation factors.

Forms part of the ribosomal stalk which helps the ribosome interact with GTP-bound translation factors. Is thus essential for accurate translation. This is Large ribosomal subunit protein bL12 from Aromatoleum aromaticum (strain DSM 19018 / LMG 30748 / EbN1) (Azoarcus sp. (strain EbN1)).